Here is a 130-residue protein sequence, read N- to C-terminus: Guanylate kinase (130 aa).

Positions 1 to 130 (KIFEDPTTSY…EKIQSRVNEA (130 aa)) constitute a Guanylate kinase-like domain.

The protein belongs to the guanylate kinase family.

It localises to the cytoplasm. It carries out the reaction GMP + ATP = GDP + ADP. Functionally, essential for recycling GMP and indirectly, cGMP. In Staphylococcus epidermidis, this protein is Guanylate kinase (gmk).